A 361-amino-acid polypeptide reads, in one-letter code: Chorismate synthase (361 aa).

2 residues coordinate NADP(+): Arg48 and Arg54. Residues 125–127 (RSS), 238–239 (NA), Gly278, 293–297 (KPTSS), and Arg319 contribute to the FMN site.

Belongs to the chorismate synthase family. Homotetramer. It depends on FMNH2 as a cofactor.

The enzyme catalyses 5-O-(1-carboxyvinyl)-3-phosphoshikimate = chorismate + phosphate. It participates in metabolic intermediate biosynthesis; chorismate biosynthesis; chorismate from D-erythrose 4-phosphate and phosphoenolpyruvate: step 7/7. In terms of biological role, catalyzes the anti-1,4-elimination of the C-3 phosphate and the C-6 proR hydrogen from 5-enolpyruvylshikimate-3-phosphate (EPSP) to yield chorismate, which is the branch point compound that serves as the starting substrate for the three terminal pathways of aromatic amino acid biosynthesis. This reaction introduces a second double bond into the aromatic ring system. The sequence is that of Chorismate synthase from Edwardsiella ictaluri (strain 93-146).